We begin with the raw amino-acid sequence, 182 residues long: uncharacterized protein (182 aa).

Positions 151 to 172 (RGPGKPFADEKPCPRERPPADQ) are disordered. Basic and acidic residues predominate over residues 157-169 (FADEKPCPRERPP).

This is an uncharacterized protein from Mycobacterium tuberculosis (strain CDC 1551 / Oshkosh).